The chain runs to 316 residues: N-acetyl-gamma-glutamyl-phosphate reductase (316 aa).

The active site involves Cys-136.

It belongs to the NAGSA dehydrogenase family. Type 1 subfamily.

It is found in the cytoplasm. The enzyme catalyses N-acetyl-L-glutamate 5-semialdehyde + phosphate + NADP(+) = N-acetyl-L-glutamyl 5-phosphate + NADPH + H(+). The protein operates within amino-acid biosynthesis; L-arginine biosynthesis; N(2)-acetyl-L-ornithine from L-glutamate: step 3/4. Catalyzes the NADPH-dependent reduction of N-acetyl-5-glutamyl phosphate to yield N-acetyl-L-glutamate 5-semialdehyde. The sequence is that of N-acetyl-gamma-glutamyl-phosphate reductase from Xanthomonas euvesicatoria pv. vesicatoria (strain 85-10) (Xanthomonas campestris pv. vesicatoria).